The chain runs to 266 residues: Undecaprenyl-diphosphatase 1 (266 aa).

8 helical membrane passes run M1–I21, Q39–F59, W87–I107, T114–M134, A149–A169, A183–V203, A218–L238, and M246–L266.

The protein belongs to the UppP family.

It localises to the cell inner membrane. The enzyme catalyses di-trans,octa-cis-undecaprenyl diphosphate + H2O = di-trans,octa-cis-undecaprenyl phosphate + phosphate + H(+). In terms of biological role, catalyzes the dephosphorylation of undecaprenyl diphosphate (UPP). Confers resistance to bacitracin. This is Undecaprenyl-diphosphatase 1 from Shewanella oneidensis (strain ATCC 700550 / JCM 31522 / CIP 106686 / LMG 19005 / NCIMB 14063 / MR-1).